A 104-amino-acid polypeptide reads, in one-letter code: L-rhamnose mutarotase (104 aa).

Substrate is bound at residue Tyr18. Catalysis depends on His22, which acts as the Proton donor. Substrate contacts are provided by residues Tyr41 and 76–77 (WW).

This sequence belongs to the rhamnose mutarotase family. As to quaternary structure, homodimer.

It localises to the cytoplasm. The catalysed reaction is alpha-L-rhamnose = beta-L-rhamnose. It functions in the pathway carbohydrate metabolism; L-rhamnose metabolism. In terms of biological role, involved in the anomeric conversion of L-rhamnose. This is L-rhamnose mutarotase from Tolumonas auensis (strain DSM 9187 / NBRC 110442 / TA 4).